Consider the following 300-residue polypeptide: Recombination-associated protein RdgC (300 aa).

It belongs to the RdgC family.

Its subcellular location is the cytoplasm. It is found in the nucleoid. Its function is as follows. May be involved in recombination. This Janthinobacterium sp. (strain Marseille) (Minibacterium massiliensis) protein is Recombination-associated protein RdgC.